Consider the following 299-residue polypeptide: Xyloglucan endotransglucosylase protein 6 (299 aa).

A signal peptide spans Met1–Gly25. One can recognise a GH16 domain in the interval Gly26 to Tyr219. Glu105 serves as the catalytic Nucleophile. Catalysis depends on Glu109, which acts as the Proton donor. Residue Glu109 coordinates xyloglucan. N-linked (GlcNAc...) asparagine glycosylation is present at Asn113. Residues Gln122–Asn124, Asn132–Glu134, Asp198–Trp199, and Gly203 each bind xyloglucan. Cystine bridges form between Cys227–Cys242 and Cys281–Cys294. Xyloglucan is bound at residue Arg286.

The protein belongs to the glycosyl hydrolase 16 family. XTH group 1 subfamily. Post-translationally, contains at least one intrachain disulfide bond essential for its enzymatic activity. As to expression, highest expression in ripe leaves after full expansion. Also expressed in fruits, and at a lower level in flowers and stems (picked at anthesis).

The protein resides in the secreted. It is found in the cell wall. Its subcellular location is the extracellular space. The protein localises to the apoplast. The enzyme catalyses breaks a beta-(1-&gt;4) bond in the backbone of a xyloglucan and transfers the xyloglucanyl segment on to O-4 of the non-reducing terminal glucose residue of an acceptor, which can be a xyloglucan or an oligosaccharide of xyloglucan.. Catalyzes xyloglucan endotransglycosylation (XET). Cleaves and religates xyloglucan polymers. Does not catalyze xyloglucan endohydrolysis (XEH). Probably involved in cell wall restructuring during postharvest fruit softening. The chain is Xyloglucan endotransglucosylase protein 6 from Diospyros kaki (Kaki persimmon).